The primary structure comprises 604 residues: ATP-dependent RNA helicase dbp6 (604 aa).

Residues 1–16 (MSVEVDKSSHSKPKIE) show a composition bias toward basic and acidic residues. Disordered regions lie at residues 1-37 (MSVE…HVTA) and 51-70 (FSQA…NERD). Low complexity predominate over residues 51–60 (FSQAAQQALK). The short motif at 149 to 157 (GFAVQAAVL) is the Q motif element. The region spanning 167–379 (GPMYSYGGDV…SLKLHNPRLV (213 aa)) is the Helicase ATP-binding domain. 180–187 (AATGSGKT) is a binding site for ATP. A DEAD box motif is present at residues 292 to 295 (DEAD). Residues 406 to 573 (TLQEYHVSVS…RIKIEFSHIS (168 aa)) enclose the Helicase C-terminal domain.

It belongs to the DEAD box helicase family. DDX51/DBP6 subfamily. In terms of assembly, associated with pre-ribosomal particles.

It is found in the nucleus. The protein localises to the nucleolus. It catalyses the reaction ATP + H2O = ADP + phosphate + H(+). In terms of biological role, ATP-binding RNA helicase involved in the biogenesis of 60S ribosomal subunits and is required for the normal formation of 25S and 5.8S rRNAs. The polypeptide is ATP-dependent RNA helicase dbp6 (dbp6) (Schizosaccharomyces pombe (strain 972 / ATCC 24843) (Fission yeast)).